The following is a 44-amino-acid chain: Keratin-associated protein 20-3 (44 aa).

Belongs to the KRTAP type 20 family. As to quaternary structure, interacts with hair keratins.

Its function is as follows. In the hair cortex, hair keratin intermediate filaments are embedded in an interfilamentous matrix, consisting of hair keratin-associated proteins (KRTAP), which are essential for the formation of a rigid and resistant hair shaft through their extensive disulfide bond cross-linking with abundant cysteine residues of hair keratins. The matrix proteins include the high-sulfur and high-glycine-tyrosine keratins. This is Keratin-associated protein 20-3 (KRTAP20-3) from Homo sapiens (Human).